The primary structure comprises 333 residues: Late embryogenesis abundant protein 1 (333 aa).

Disordered stretches follow at residues 1–20 (MASR…RRAA) and 116–246 (KDYT…GQGQ). The stretch at 3-52 (SRQDRREARAEADARRAAEEIARARDERVMQAEVDARSAADEIARARADR) forms a coiled coil. 3 stretches are compositionally biased toward basic and acidic residues: residues 116–163 (KDYT…KDAV), 172–219 (EATK…DATK), and 227–241 (DKAR…DATD).

It belongs to the LEA type 4 family.

This chain is Late embryogenesis abundant protein 1 (LEA1), found in Oryza sativa subsp. indica (Rice).